The primary structure comprises 504 residues: MTLLRDLLLLYINSLLFINPSIGENILVFLPTKTYSHFKPLEPLFQELAMRGHNVTVFSGFSLTKNISNYSSIVFSAEIEFVNIGMGNLRKQSRIYNWIYVHNELQNYFTQLISDNQLQELLSNKDTQFDLIFIELYHVDGVFALSHRFNCPIIGLSFQPVLPIYNWLIGNPTTFSYIPHVYLPFTDIMSFWKRIINAVFSIFTAAFYNFVSTKGYQKHVDLLLRQTESPKLNIEELSESLSLILAEFHFSSAYTRPNLPNVIDIAGIHIQSPKPLPQDLLDFLDQSEHGVIYVSLGTLIDPIHTDHLGLNLINVFRKLRQRVIWKWKKEFFHDVPKNVLIGEWFPQIDILNHPRCKLFISHGGYHSMLESIYSSVPILGIPFFTDQHHNTAIIEKLKIGKKASTEASEEDLLTAVKELLSNETFKRNSQHQSSIFRDRPMSPMDTAIYWTEYILRYKGASHMKSAVIDLYWFQYILLDIILFYSLIVLILLCILRIFFRMLTK.

Residues 1 to 23 (MTLLRDLLLLYINSLLFINPSIG) form the signal peptide. The Lumenal portion of the chain corresponds to 24–474 (ENILVFLPTK…SAVIDLYWFQ (451 aa)). 4 N-linked (GlcNAc...) asparagine glycosylation sites follow: asparagine 54, asparagine 66, asparagine 69, and asparagine 422. The chain crosses the membrane as a helical span at residues 475-495 (YILLDIILFYSLIVLILLCIL). The Cytoplasmic portion of the chain corresponds to 496–504 (RIFFRMLTK).

The protein belongs to the UDP-glycosyltransferase family.

Its subcellular location is the microsome membrane. Its function is as follows. Catalyzes the transfer of a glycosyl group from a UDP-sugar to an acceptor molecule. This is UDP-glycosyltransferase UGT4 from Dactylopius coccus (Cochineal).